The sequence spans 339 residues: Dihydroorotase (339 aa).

Zn(2+) is bound by residues histidine 12 and histidine 14. Substrate is bound by residues 14-16 (HVR) and asparagine 40. Zn(2+) contacts are provided by lysine 94, histidine 133, histidine 167, and aspartate 239. N6-carboxylysine is present on lysine 94. Histidine 133 serves as a coordination point for substrate. Aspartate 239 is a catalytic residue. Substrate is bound by residues histidine 243 and alanine 255.

It belongs to the metallo-dependent hydrolases superfamily. DHOase family. Class II DHOase subfamily. As to quaternary structure, homodimer. Zn(2+) serves as cofactor.

The catalysed reaction is (S)-dihydroorotate + H2O = N-carbamoyl-L-aspartate + H(+). It functions in the pathway pyrimidine metabolism; UMP biosynthesis via de novo pathway; (S)-dihydroorotate from bicarbonate: step 3/3. Functionally, catalyzes the reversible cyclization of carbamoyl aspartate to dihydroorotate. The sequence is that of Dihydroorotase from Helicobacter acinonychis (strain Sheeba).